Reading from the N-terminus, the 257-residue chain is MSSRKSLSVVMIAKNEAGLLPDCLRSVAWADEIIVLDSGSEDDSVAVAESLGAKVFTHTDWQGFGKQRQLAQSYASHDYVLMIDADERVTPELRQSIERVLNAPDDGAVYSCARRNLFLGRFMRHSGWYPDRVNRLYANSRYRYNDDLVHELLNIGDAKVIPLSGDMLHLTCRDFFAFQRKQLRYAEEWATQRHRAGKRCGYLSILTHTLGAFVKTWLLRAGFLDGKQGLLLAVVNAQYTFNKYAALWALGRNYSEK.

This sequence belongs to the glycosyltransferase 2 family. WaaE/KdtX subfamily.

It participates in bacterial outer membrane biogenesis; LPS core biosynthesis. The protein is Lipopolysaccharide core biosynthesis glycosyltransferase KdtX (kdtX) of Serratia marcescens.